A 287-amino-acid chain; its full sequence is Co-chaperone protein DjlA (287 aa).

Over 1–6 the chain is Periplasmic; it reads MQIFGK. A helical membrane pass occupies residues 7 to 30; sequence ILGAFFGFLFGGVFGALFGLFIGH. At 31–287 the chain is on the cytoplasmic side; that stretch reads QFDKARRLSQ…DLIKKEKGFK (257 aa). A disordered region spans residues 192 to 213; it reads GGFGGQQHQSHHSSSHGGWQQA. One can recognise a J domain in the interval 221–287; it reads DAYKILGIDA…DLIKKEKGFK (67 aa).

Homodimer.

The protein resides in the cell inner membrane. In terms of biological role, regulatory DnaK co-chaperone. Direct interaction between DnaK and DjlA is needed for the induction of the wcaABCDE operon, involved in the synthesis of a colanic acid polysaccharide capsule, possibly through activation of the RcsB/RcsC phosphotransfer signaling pathway. The colanic acid capsule may help the bacterium survive conditions outside the host. The polypeptide is Co-chaperone protein DjlA (Vibrio vulnificus (strain YJ016)).